We begin with the raw amino-acid sequence, 137 residues long: Large ribosomal subunit protein mL41 (137 aa).

The N-terminal 13 residues, 1–13 (MGVLAAAARCLVR), are a transit peptide targeting the mitochondrion.

It belongs to the mitochondrion-specific ribosomal protein mL41 family. Component of the mitochondrial large ribosomal subunit (mt-LSU). Mature mammalian 55S mitochondrial ribosomes consist of a small (28S) and a large (39S) subunit. The 28S small subunit contains a 12S ribosomal RNA (12S mt-rRNA) and 30 different proteins. The 39S large subunit contains a 16S rRNA (16S mt-rRNA), a copy of mitochondrial valine transfer RNA (mt-tRNA(Val)), which plays an integral structural role, and 52 different proteins. Interacts with BCL2. As to expression, present in kidney, liver, thymus and testis, and at lower level in brain and spleen (at protein level).

Its subcellular location is the mitochondrion. In terms of biological role, component of the mitochondrial ribosome large subunit. Also involved in apoptosis and cell cycle. Enhances p53/TP53 stability, thereby contributing to p53/TP53-induced apoptosis in response to growth-inhibitory condition. Enhances p53/TP53 translocation to the mitochondria. Has the ability to arrest the cell cycle at the G1 phase, possibly by stabilizing the CDKN1A and CDKN1B (p27Kip1) proteins. The chain is Large ribosomal subunit protein mL41 (MRPL41) from Homo sapiens (Human).